The primary structure comprises 671 residues: Replication protein A 70 kDa DNA-binding subunit (671 aa).

2 disordered regions span residues 143-166 (QVSQPKQMVTPPVSNINKPTPAVN) and 190-219 (MNKTAPVKQNNNNNNNNNGNNKNNSSLQIS). Residues 199 to 213 (NNNNNNNNNGNNKNN) are compositionally biased toward low complexity. The OB DNA-binding region spans 240 to 322 (QTIKVRITKK…NKGDHTVTVN (83 aa)). The C4-type zinc finger occupies 530-549 (CFSCKKKIARNNEVWTCINC).

This sequence belongs to the replication factor A protein 1 family. In terms of assembly, component of the replication protein A complex (RPA), a heterotrimeric complex composed of RPA1, RPA2/TEB2 and RPA3/TEB3.

As part of the heterotrimeric replication protein A (RPA) complex, binds and stabilizes single-stranded DNA intermediates, that form during DNA replication or upon DNA stress. It prevents their reannealing and in parallel, recruits and activates different proteins and complexes involved in DNA metabolism. Thereby, it plays an essential role both in DNA replication and the cellular response to DNA damage. In the cellular response to DNA damage, the RPA complex controls DNA repair and DNA damage checkpoint activation. This chain is Replication protein A 70 kDa DNA-binding subunit, found in Tetrahymena thermophila (strain SB210).